A 220-amino-acid chain; its full sequence is PRA1 family protein B4 (220 aa).

Residues 1–27 form a disordered region; that stretch reads MASSAPPVLPISNPQTVPSAAPSSVES. Residues 12 to 27 are compositionally biased toward polar residues; the sequence is SNPQTVPSAAPSSVES. 5 helical membrane-spanning segments follow: residues 83–103, 105–125, 146–166, 170–190, and 196–216; these read YSYF…FSLV, HPFS…LYLF, GCLI…SVLV, MIGV…DLFL, and AATG…PAVI.

It belongs to the PRA1 family. As to quaternary structure, interacts with PRA1B1, PRA1B2, PRA1B3, PRA1B5, PRA1B6 and PRA1E. Expressed in roots, lateral roots, lateral root caps, stomata and trichomes.

The protein resides in the endosome membrane. In terms of biological role, may be involved in both secretory and endocytic intracellular trafficking in the endosomal/prevacuolar compartments. The protein is PRA1 family protein B4 (PRA1B4) of Arabidopsis thaliana (Mouse-ear cress).